A 153-amino-acid chain; its full sequence is NAD(P)H-quinone oxidoreductase subunit N (153 aa).

Belongs to the complex I NdhN subunit family. NDH-1 can be composed of about 15 different subunits; different subcomplexes with different compositions have been identified which probably have different functions.

The protein resides in the cellular thylakoid membrane. The catalysed reaction is a plastoquinone + NADH + (n+1) H(+)(in) = a plastoquinol + NAD(+) + n H(+)(out). It carries out the reaction a plastoquinone + NADPH + (n+1) H(+)(in) = a plastoquinol + NADP(+) + n H(+)(out). Its function is as follows. NDH-1 shuttles electrons from an unknown electron donor, via FMN and iron-sulfur (Fe-S) centers, to quinones in the respiratory and/or the photosynthetic chain. The immediate electron acceptor for the enzyme in this species is believed to be plastoquinone. Couples the redox reaction to proton translocation, and thus conserves the redox energy in a proton gradient. Cyanobacterial NDH-1 also plays a role in inorganic carbon-concentration. The protein is NAD(P)H-quinone oxidoreductase subunit N of Prochlorococcus marinus (strain MIT 9303).